Consider the following 286-residue polypeptide: uncharacterized protein (286 aa).

This sequence belongs to the methyltransferase superfamily.

Its function is as follows. Involved in osmoadaptation. This is an uncharacterized protein from Emericella nidulans (strain FGSC A4 / ATCC 38163 / CBS 112.46 / NRRL 194 / M139) (Aspergillus nidulans).